The following is a 338-amino-acid chain: Endonuclease V (338 aa).

Residues Asp52 and Asp126 each contribute to the Mg(2+) site. A disordered region spans residues 253–338 (QLGVAPAQRK…PSPAWVQSPP (86 aa)). Composition is skewed to basic and acidic residues over residues 260–270 (QRKDRSQKEQR) and 287–323 (RPPE…HQED). Over residues 328–338 (PPSPAWVQSPP) the composition is skewed to pro residues.

The protein belongs to the endonuclease V family. Monomer. Interacts with PABPC1; the interaction is RNA-dependent and stimulates ENDOV activity. Mg(2+) serves as cofactor. Highest levels detected in liver with high levels also found in heart, kidney and testis. Expressed at low levels in brain.

The protein localises to the cytoplasm. It is found in the nucleus. Its subcellular location is the nucleolus. The protein resides in the stress granule. In terms of biological role, endoribonuclease that specifically cleaves inosine-containing RNAs: cleaves RNA at the second phosphodiester bond 3' to inosine. Active against both single-stranded and double-stranded RNAs. Has strong preference for single-stranded RNAs (ssRNAs) toward double-stranded RNAs (dsRNAs). Cleaves mRNAs and tRNAs containing inosine. Also able to cleave structure-specific dsRNA substrates containing the specific sites 5'-IIUI-3' and 5'-UIUU-3'. Inosine is present in a number of RNAs following editing; the function of inosine-specific endoribonuclease is still unclear: it could either play a regulatory role in edited RNAs, or be involved in antiviral response by removing the hyperedited long viral dsRNA genome that has undergone A-to-I editing. Binds branched DNA structures. The polypeptide is Endonuclease V (Endov) (Mus musculus (Mouse)).